The sequence spans 439 residues: sn-glycerol-3-phosphate-binding periplasmic protein UgpB (439 aa).

The first 25 residues, methionine 1 to alanine 25, serve as a signal peptide directing secretion. Residues tyrosine 67, glutamate 91, serine 146, serine 272, glycine 309, tyrosine 348, and arginine 399 each coordinate sn-glycerol 3-phosphate.

Belongs to the bacterial solute-binding protein 1 family. The complex is composed of two ATP-binding proteins (UgpC), two transmembrane proteins (UgpA and UgpE) and a solute-binding protein (UgpB).

It localises to the periplasm. Part of the ABC transporter complex UgpBAEC involved in sn-glycerol-3-phosphate (G3P) import. Binds G3P. In Yersinia pseudotuberculosis serotype I (strain IP32953), this protein is sn-glycerol-3-phosphate-binding periplasmic protein UgpB (ugpB).